The following is a 269-amino-acid chain: Tryptophan synthase alpha chain (269 aa).

Residues Glu49 and Asp60 each act as proton acceptor in the active site.

Belongs to the TrpA family. Tetramer of two alpha and two beta chains.

It carries out the reaction (1S,2R)-1-C-(indol-3-yl)glycerol 3-phosphate + L-serine = D-glyceraldehyde 3-phosphate + L-tryptophan + H2O. It participates in amino-acid biosynthesis; L-tryptophan biosynthesis; L-tryptophan from chorismate: step 5/5. The alpha subunit is responsible for the aldol cleavage of indoleglycerol phosphate to indole and glyceraldehyde 3-phosphate. This Acidovorax ebreus (strain TPSY) (Diaphorobacter sp. (strain TPSY)) protein is Tryptophan synthase alpha chain.